We begin with the raw amino-acid sequence, 104 residues long: Large ribosomal subunit protein bL21c (104 aa).

The protein belongs to the bacterial ribosomal protein bL21 family. As to quaternary structure, part of the 50S ribosomal subunit.

The protein resides in the plastid. The protein localises to the cyanelle. This protein binds to 23S rRNA. This chain is Large ribosomal subunit protein bL21c, found in Cyanophora paradoxa.